Consider the following 377-residue polypeptide: Succinyl-diaminopimelate desuccinylase (377 aa).

His-68 contacts Zn(2+). The active site involves Asp-70. Zn(2+) is bound at residue Asp-101. The active-site Proton acceptor is the Glu-135. Glu-136, Glu-164, and His-350 together coordinate Zn(2+).

It belongs to the peptidase M20A family. DapE subfamily. In terms of assembly, homodimer. The cofactor is Zn(2+). Co(2+) serves as cofactor.

It carries out the reaction N-succinyl-(2S,6S)-2,6-diaminopimelate + H2O = (2S,6S)-2,6-diaminopimelate + succinate. It participates in amino-acid biosynthesis; L-lysine biosynthesis via DAP pathway; LL-2,6-diaminopimelate from (S)-tetrahydrodipicolinate (succinylase route): step 3/3. Its function is as follows. Catalyzes the hydrolysis of N-succinyl-L,L-diaminopimelic acid (SDAP), forming succinate and LL-2,6-diaminopimelate (DAP), an intermediate involved in the bacterial biosynthesis of lysine and meso-diaminopimelic acid, an essential component of bacterial cell walls. The polypeptide is Succinyl-diaminopimelate desuccinylase (Vibrio cholerae serotype O1 (strain ATCC 39541 / Classical Ogawa 395 / O395)).